The following is a 390-amino-acid chain: Phosphopentomutase (390 aa).

Positions 12, 285, 290, 326, 327, and 338 each coordinate Mn(2+).

It belongs to the phosphopentomutase family. Mn(2+) is required as a cofactor.

Its subcellular location is the cytoplasm. The enzyme catalyses 2-deoxy-alpha-D-ribose 1-phosphate = 2-deoxy-D-ribose 5-phosphate. The catalysed reaction is alpha-D-ribose 1-phosphate = D-ribose 5-phosphate. Its pathway is carbohydrate degradation; 2-deoxy-D-ribose 1-phosphate degradation; D-glyceraldehyde 3-phosphate and acetaldehyde from 2-deoxy-alpha-D-ribose 1-phosphate: step 1/2. In terms of biological role, isomerase that catalyzes the conversion of deoxy-ribose 1-phosphate (dRib-1-P) and ribose 1-phosphate (Rib-1-P) to deoxy-ribose 5-phosphate (dRib-5-P) and ribose 5-phosphate (Rib-5-P), respectively. The chain is Phosphopentomutase from Brevibacillus brevis (strain 47 / JCM 6285 / NBRC 100599).